Reading from the N-terminus, the 247-residue chain is MSGHSKWASIKHKKAANDSKKGKIWSKIAKEITIAVKEGGSPDPDQNARLRMVIVKAKGTNMPNDNIDRAIKRGAGAGEGANIEEMSYEGYAPGGVAIIVDVATDNKNRTAAEIRSIFSKNGGNLAENGAVSWQFKKKAVVMIPAAGNTEESLMDIVLDAGAEDIEQDEEVFTITGPMETLSSIVDALKAKGIEPESAEIVRVADNTMTIAENDAKKVMKIIGLFEDHDDVSAVATNLEITDNLIEE.

The tract at residues 1 to 22 (MSGHSKWASIKHKKAANDSKKG) is disordered.

The protein belongs to the TACO1 family.

It is found in the cytoplasm. The sequence is that of Probable transcriptional regulatory protein BHWA1_01533 from Brachyspira hyodysenteriae (strain ATCC 49526 / WA1).